The following is a 271-amino-acid chain: Phosphonates import ATP-binding protein PhnC 2 (271 aa).

In terms of domain architecture, ABC transporter spans 2 to 245 (LTIDKLTKRF…VARDIYGAGA (244 aa)). 34–41 (GRSGAGKS) contacts ATP.

It belongs to the ABC transporter superfamily. Phosphonates importer (TC 3.A.1.9.1) family. The complex is composed of two ATP-binding proteins (PhnC), two transmembrane proteins (PhnE) and a solute-binding protein (PhnD).

It is found in the cell inner membrane. It catalyses the reaction phosphonate(out) + ATP + H2O = phosphonate(in) + ADP + phosphate + H(+). Its function is as follows. Part of the ABC transporter complex PhnCDE involved in phosphonates import. Responsible for energy coupling to the transport system. The polypeptide is Phosphonates import ATP-binding protein PhnC 2 (Roseobacter denitrificans (strain ATCC 33942 / OCh 114) (Erythrobacter sp. (strain OCh 114))).